The primary structure comprises 227 residues: Uridylate kinase (227 aa).

6 to 10 is a binding site for ATP; sequence KVSGK. Glycine 43 is a binding site for UMP. The ATP site is built by glycine 44 and arginine 48. Residues aspartate 65 and 113–119 contribute to the UMP site; that span reads FQPGQST. ATP is bound by residues threonine 139, asparagine 140, tyrosine 145, and aspartate 148.

The protein belongs to the UMP kinase family. In terms of assembly, homohexamer.

It is found in the cytoplasm. The catalysed reaction is UMP + ATP = UDP + ADP. Its pathway is pyrimidine metabolism; CTP biosynthesis via de novo pathway; UDP from UMP (UMPK route): step 1/1. Its activity is regulated as follows. Inhibited by UTP. Catalyzes the reversible phosphorylation of UMP to UDP. The sequence is that of Uridylate kinase from Sulfolobus acidocaldarius (strain ATCC 33909 / DSM 639 / JCM 8929 / NBRC 15157 / NCIMB 11770).